Consider the following 597-residue polypeptide: mRNA-capping enzyme (597 aa).

The tract at residues 1 to 212 (MAYNKIPPRW…DEDGKKDSEP (212 aa)) is TPase. The 159-residue stretch at 25-183 (LPLKTMLGPR…FRRYGDIEEA (159 aa)) folds into the Tyrosine-protein phosphatase domain. Residue cysteine 126 is the Phosphocysteine intermediate of the active site. The tract at residues 181–221 (EEAPPPPVLPDWCFEDEDEEDEDEDGKKDSEPGSSASFSKR) is disordered. Residues 193-204 (CFEDEDEEDEDE) show a composition bias toward acidic residues. The tract at residues 229-597 (GAIFLEGITV…PPPKRLHRPT (369 aa)) is GTase. Lysine 294 functions as the N6-GMP-lysine intermediate in the catalytic mechanism. GTP-binding positions include arginine 299, arginine 315, 343-345 (DGE), 458-460 (KWK), and 528-533 (RQRIDK). An interaction with POLR2A region spans residues 330 to 386 (RKDLRMHLSNTLLDGEMIIDKVNGQAVPRYLIYDIIKFNAQPVGDCDFNIRLQCIER). The segment at 573 to 597 (KRKYPLDPDTELMPPPPPKRLHRPT) is disordered.

This sequence in the N-terminal section; belongs to the non-receptor class of the protein-tyrosine phosphatase family. The protein in the C-terminal section; belongs to the eukaryotic GTase family. As to quaternary structure, interacts with SUPT5H and RNMT. Interacts with POLR2A (via C-terminus); this enhances guanylyltransferase activity. Binds (via GTase domain) to the elongating phosphorylated form of RNA polymerase II; can form direct interactions with the phosphorylated POLR2A C-terminal domain and indirect interactions via bound RNA.

It is found in the nucleus. It carries out the reaction a 5'-end triphospho-ribonucleoside in mRNA + H2O = a 5'-end diphospho-ribonucleoside in mRNA + phosphate + H(+). The enzyme catalyses a 5'-end diphospho-ribonucleoside in mRNA + GTP + H(+) = a 5'-end (5'-triphosphoguanosine)-ribonucleoside in mRNA + diphosphate. RNA triphosphatase activity is inhibited by vanadate, iodoacetate and magnesium. Its function is as follows. Bifunctional mRNA-capping enzyme exhibiting RNA 5'-triphosphate monophosphatase activity in the N-terminal part and mRNA guanylyltransferase activity in the C-terminal part. Catalyzes the first two steps of cap formation: by removing the gamma-phosphate from the 5'-triphosphate end of nascent mRNA to yield a diphosphate end, and by transferring the GMP moiety of GTP to the 5'-diphosphate terminus of RNA via a covalent enzyme-GMP reaction intermediate. The chain is mRNA-capping enzyme (Rngtt) from Mus musculus (Mouse).